The following is a 263-amino-acid chain: Endonuclease NucS (263 aa).

Belongs to the NucS endonuclease family.

The protein localises to the cytoplasm. In terms of biological role, cleaves both 3' and 5' ssDNA extremities of branched DNA structures. In Methanocaldococcus jannaschii (strain ATCC 43067 / DSM 2661 / JAL-1 / JCM 10045 / NBRC 100440) (Methanococcus jannaschii), this protein is Endonuclease NucS.